A 220-amino-acid chain; its full sequence is Putative NAD(P)H nitroreductase SERP2086 (220 aa).

Belongs to the nitroreductase family. It depends on FMN as a cofactor.

The chain is Putative NAD(P)H nitroreductase SERP2086 from Staphylococcus epidermidis (strain ATCC 35984 / DSM 28319 / BCRC 17069 / CCUG 31568 / BM 3577 / RP62A).